The chain runs to 151 residues: Transcription antitermination protein NusB (151 aa).

Belongs to the NusB family.

Involved in transcription antitermination. Required for transcription of ribosomal RNA (rRNA) genes. Binds specifically to the boxA antiterminator sequence of the ribosomal RNA (rrn) operons. The chain is Transcription antitermination protein NusB from Thermus thermophilus (strain ATCC BAA-163 / DSM 7039 / HB27).